Here is a 153-residue protein sequence, read N- to C-terminus: Putative pre-16S rRNA nuclease (153 aa).

The protein belongs to the YqgF nuclease family.

Its subcellular location is the cytoplasm. Functionally, could be a nuclease involved in processing of the 5'-end of pre-16S rRNA. This is Putative pre-16S rRNA nuclease from Prochlorococcus marinus (strain AS9601).